Consider the following 247-residue polypeptide: 3-deoxy-manno-octulosonate cytidylyltransferase (247 aa).

It belongs to the KdsB family.

The protein localises to the cytoplasm. It carries out the reaction 3-deoxy-alpha-D-manno-oct-2-ulosonate + CTP = CMP-3-deoxy-beta-D-manno-octulosonate + diphosphate. Its pathway is nucleotide-sugar biosynthesis; CMP-3-deoxy-D-manno-octulosonate biosynthesis; CMP-3-deoxy-D-manno-octulosonate from 3-deoxy-D-manno-octulosonate and CTP: step 1/1. It functions in the pathway bacterial outer membrane biogenesis; lipopolysaccharide biosynthesis. Functionally, activates KDO (a required 8-carbon sugar) for incorporation into bacterial lipopolysaccharide in Gram-negative bacteria. The chain is 3-deoxy-manno-octulosonate cytidylyltransferase from Pelodictyon phaeoclathratiforme (strain DSM 5477 / BU-1).